We begin with the raw amino-acid sequence, 72 residues long: Small ribosomal subunit protein bS18 (72 aa).

This sequence belongs to the bacterial ribosomal protein bS18 family. As to quaternary structure, part of the 30S ribosomal subunit. Forms a tight heterodimer with protein bS6.

Binds as a heterodimer with protein bS6 to the central domain of the 16S rRNA, where it helps stabilize the platform of the 30S subunit. This is Small ribosomal subunit protein bS18 from Francisella tularensis subsp. holarctica (strain FTNF002-00 / FTA).